The chain runs to 341 residues: L-threonine 3-dehydrogenase (341 aa).

A Zn(2+)-binding site is contributed by Cys38. Residues Thr40 and His43 each act as charge relay system in the active site. Residues His63, Glu64, Cys93, Cys96, Cys99, and Cys107 each contribute to the Zn(2+) site. Residues Ile175, Asp195, Arg200, 262 to 264, and 286 to 287 contribute to the NAD(+) site; these read LGI and IY.

The protein belongs to the zinc-containing alcohol dehydrogenase family. Homotetramer. Requires Zn(2+) as cofactor.

Its subcellular location is the cytoplasm. It catalyses the reaction L-threonine + NAD(+) = (2S)-2-amino-3-oxobutanoate + NADH + H(+). Its pathway is amino-acid degradation; L-threonine degradation via oxydo-reductase pathway; glycine from L-threonine: step 1/2. Its function is as follows. Catalyzes the NAD(+)-dependent oxidation of L-threonine to 2-amino-3-ketobutyrate. This is L-threonine 3-dehydrogenase from Shewanella sp. (strain MR-7).